We begin with the raw amino-acid sequence, 71 residues long: Ribosome modulation factor (71 aa).

This sequence belongs to the ribosome modulation factor family.

It localises to the cytoplasm. In terms of biological role, during stationary phase, converts 70S ribosomes to an inactive dimeric form (100S ribosomes). This is Ribosome modulation factor from Pseudomonas savastanoi pv. phaseolicola (strain 1448A / Race 6) (Pseudomonas syringae pv. phaseolicola (strain 1448A / Race 6)).